The sequence spans 313 residues: Ribosomal protein L11 methyltransferase (313 aa).

Residues Thr163, Gly184, Asp206, and Asn249 each contribute to the S-adenosyl-L-methionine site.

This sequence belongs to the methyltransferase superfamily. PrmA family.

The protein resides in the cytoplasm. The catalysed reaction is L-lysyl-[protein] + 3 S-adenosyl-L-methionine = N(6),N(6),N(6)-trimethyl-L-lysyl-[protein] + 3 S-adenosyl-L-homocysteine + 3 H(+). Functionally, methylates ribosomal protein L11. In Brevibacillus brevis (strain 47 / JCM 6285 / NBRC 100599), this protein is Ribosomal protein L11 methyltransferase.